A 150-amino-acid chain; its full sequence is Urease accessory protein UreE (150 aa).

The protein belongs to the UreE family.

The protein localises to the cytoplasm. Functionally, involved in urease metallocenter assembly. Binds nickel. Probably functions as a nickel donor during metallocenter assembly. In Streptococcus salivarius (strain 57.I), this protein is Urease accessory protein UreE.